Here is a 467-residue protein sequence, read N- to C-terminus: ATP synthase subunit beta 1 (467 aa).

150 to 157 (GGAGVGKT) lines the ATP pocket.

This sequence belongs to the ATPase alpha/beta chains family. As to quaternary structure, F-type ATPases have 2 components, CF(1) - the catalytic core - and CF(0) - the membrane proton channel. CF(1) has five subunits: alpha(3), beta(3), gamma(1), delta(1), epsilon(1). CF(0) has three main subunits: a(1), b(2) and c(9-12). The alpha and beta chains form an alternating ring which encloses part of the gamma chain. CF(1) is attached to CF(0) by a central stalk formed by the gamma and epsilon chains, while a peripheral stalk is formed by the delta and b chains.

It localises to the cell inner membrane. It carries out the reaction ATP + H2O + 4 H(+)(in) = ADP + phosphate + 5 H(+)(out). Produces ATP from ADP in the presence of a proton gradient across the membrane. The catalytic sites are hosted primarily by the beta subunits. The chain is ATP synthase subunit beta 1 from Vibrio campbellii (strain ATCC BAA-1116).